Reading from the N-terminus, the 141-residue chain is HTH-type transcriptional regulator LrpA (141 aa).

An HTH asnC-type domain is found at 2 to 63 (IDERDKIILE…RINPKKLGYS (62 aa)). Positions 21–40 (FTEIAKKLGISETAVRKRVK) form a DNA-binding region, H-T-H motif.

Homooctamer; tetramer of dimers.

Its function is as follows. DNA-binding protein that negatively regulates its own transcription. Interferes with RNA polymerase (RNAP) recruitment by inhibiting the association of RNAP with the TBP-TFB promoter complex. This Pyrococcus horikoshii (strain ATCC 700860 / DSM 12428 / JCM 9974 / NBRC 100139 / OT-3) protein is HTH-type transcriptional regulator LrpA (lrpA).